Consider the following 309-residue polypeptide: Tagatose-6-phosphate kinase (309 aa).

This sequence belongs to the carbohydrate kinase PfkB family. LacC subfamily.

The catalysed reaction is D-tagatofuranose 6-phosphate + ATP = D-tagatofuranose 1,6-bisphosphate + ADP + H(+). It functions in the pathway carbohydrate metabolism; D-tagatose 6-phosphate degradation; D-glyceraldehyde 3-phosphate and glycerone phosphate from D-tagatose 6-phosphate: step 1/2. The sequence is that of Tagatose-6-phosphate kinase from Streptococcus pyogenes serotype M3 (strain SSI-1).